Consider the following 114-residue polypeptide: Large ribosomal subunit protein uL22 (114 aa).

The protein belongs to the universal ribosomal protein uL22 family. Part of the 50S ribosomal subunit.

In terms of biological role, this protein binds specifically to 23S rRNA; its binding is stimulated by other ribosomal proteins, e.g. L4, L17, and L20. It is important during the early stages of 50S assembly. It makes multiple contacts with different domains of the 23S rRNA in the assembled 50S subunit and ribosome. Its function is as follows. The globular domain of the protein is located near the polypeptide exit tunnel on the outside of the subunit, while an extended beta-hairpin is found that lines the wall of the exit tunnel in the center of the 70S ribosome. The sequence is that of Large ribosomal subunit protein uL22 from Streptococcus gordonii (strain Challis / ATCC 35105 / BCRC 15272 / CH1 / DL1 / V288).